The sequence spans 548 residues: Membrane protein insertase YidC (548 aa).

Transmembrane regions (helical) follow at residues 6-26, 349-369, 424-444, 455-475, and 503-523; these read NLIL…WESD, TVFQ…TLLV, LGGC…YWAL, FALW…PILM, and PIIF…YWLV.

It belongs to the OXA1/ALB3/YidC family. Type 1 subfamily. As to quaternary structure, interacts with the Sec translocase complex via SecD. Specifically interacts with transmembrane segments of nascent integral membrane proteins during membrane integration.

It localises to the cell inner membrane. Its function is as follows. Required for the insertion and/or proper folding and/or complex formation of integral membrane proteins into the membrane. Involved in integration of membrane proteins that insert both dependently and independently of the Sec translocase complex, as well as at least some lipoproteins. Aids folding of multispanning membrane proteins. The sequence is that of Membrane protein insertase YidC from Aeromonas salmonicida (strain A449).